The chain runs to 329 residues: Transposable element Tc3 transposase (329 aa).

The DNA-binding element occupies 2–135 (PRGSALSDTE…LEFAKNNMGT (134 aa)).

The protein belongs to the transposase 5 family. Homodimer or homotetramer.

The protein localises to the nucleus. In terms of biological role, binds specifically to the terminal nucleotides of the TC3 inverted repeat. Its expression results in frequent excision and transposition of endogenous TC3 elements. TC3 transposase acts by making double strand breaks at the ends of TC3 element. The excised element would then be inserted into a target sequence. The sequence is that of Transposable element Tc3 transposase (tc3a) from Caenorhabditis elegans.